The chain runs to 205 residues: Adenylate kinase (205 aa).

Residue 11-16 participates in ATP binding; that stretch reads GSGKGT. Residues 31–60 are NMP; it reads STGDIFRHNVKSMTPLGVEAKRYIDNGDFV. AMP contacts are provided by residues T32, R37, 58–60, 86–89, and Q93; these read DFV and GYPR. An LID region spans residues 127–137; the sequence is KRAEIEGRADD. Residue R128 coordinates ATP. AMP contacts are provided by R134 and R145. G173 provides a ligand contact to ATP.

The protein belongs to the adenylate kinase family. As to quaternary structure, monomer.

It is found in the cytoplasm. The catalysed reaction is AMP + ATP = 2 ADP. Its pathway is purine metabolism; AMP biosynthesis via salvage pathway; AMP from ADP: step 1/1. In terms of biological role, catalyzes the reversible transfer of the terminal phosphate group between ATP and AMP. Plays an important role in cellular energy homeostasis and in adenine nucleotide metabolism. This chain is Adenylate kinase, found in Micrococcus luteus (strain ATCC 4698 / DSM 20030 / JCM 1464 / CCM 169 / CCUG 5858 / IAM 1056 / NBRC 3333 / NCIMB 9278 / NCTC 2665 / VKM Ac-2230) (Micrococcus lysodeikticus).